The chain runs to 316 residues: Cuticle collagen 13 (316 aa).

The N-terminal stretch at 1 to 36 is a signal peptide; the sequence is MSEDLKQIAQETESLRKVAFFGIAVSTIATLTAIIA. Composition is skewed to low complexity over residues 127–157 and 183–204; these read SGAA…PGQD and APGQ…GAAL. A disordered region spans residues 127 to 316; it reads SGAAGPAGSP…CPPPRTAPGY (190 aa). Triple-helical region regions lie at residues 128–157, 176–202, 206–235, 240–266, and 269–304; these read GAAG…PGQD, GPPG…SGGA, GPPG…PGQV, GTPG…AGSS, and GGPG…EGAC. The span at 205–217 shows a compositional bias: pro residues; that stretch reads PGPPGPAGPPGPA. Positions 219–234 are enriched in low complexity; that stretch reads QPGSNGNAGAPGAPGQ. Positions 241-251 are enriched in pro residues; it reads TPGPAGPPGSP. Low complexity-rich tracts occupy residues 256 to 266 and 276 to 295; these read APGQPGQAGSS and DAGA…PGQD. Positions 307–316 are enriched in pro residues; it reads CPPPRTAPGY.

Belongs to the cuticular collagen family. Collagen polypeptide chains are complexed within the cuticle by disulfide bonds and other types of covalent cross-links.

Functionally, nematode cuticles are composed largely of collagen-like proteins. The cuticle functions both as an exoskeleton and as a barrier to protect the worm from its environment. This is Cuticle collagen 13 (col-13) from Caenorhabditis elegans.